The chain runs to 468 residues: MREIINVSVSHRSNHLITQFYNCLEPLLHDADQENDVFLNPNIDKVSKTVSYTPRALLWDAKLGNGSLGTYQYVSENDYADTLDSEQGATAKTAHRVQTHDRIRKSPYQLALDQGATVLPKINDEIAKYWSDYSKLIYDPSSFNTLQDWYHDAANQQKAPNFQNLRQVYFDNYETGSNQFRENYSNEFFDSNLHQQLEKCDSLQGFNIITELDNGWGGFSSSMLLELKDELPKVSYHTYGWNQDDVCSLKEPVHSTKTKFQMLCNKIRATIALSQESDLFFPLYANTKEAFWRSTGETVLLFDSVNSVFHGSRKQAATNSNMRKMSHLTNALTLGESKRNIVSKLNVDEYNSFSFYDRMPLYKNSKKPSHTFTQCEIDRVNHKESSMFHFTTYPWTNSDTIPDTHHSCAESVIGVTEKPRDVLKTWEDLVSRYFRYDSDREEIKDHLGTLSLEYEHGWYDDDDSDLDL.

This sequence belongs to the misato family.

It localises to the mitochondrion. In terms of biological role, involved in the partitioning of the mitochondrial organelle and mitochondrial DNA (mtDNA) inheritance. The chain is Protein DML1 (DML1) from Kluyveromyces lactis (strain ATCC 8585 / CBS 2359 / DSM 70799 / NBRC 1267 / NRRL Y-1140 / WM37) (Yeast).